A 234-amino-acid chain; its full sequence is GTP:AMP phosphotransferase, mitochondrial (234 aa).

A GTP-binding site is contributed by 24-29 (GSGKGT). The interval 45–74 (SSGDILRQEIKSESTLGREATTYIAQGKLL) is NMP. AMP is bound by residues Ser-46, Arg-51, 72 to 74 (KLL), 103 to 106 (GFPR), and Gln-110. Residues 144-181 (NRYVHVPSGRVYNLQYNPPKVPGLDDITGEPLTKRLDD) are LID. Residues Arg-145 and 154–155 (VY) each bind GTP. AMP is bound by residues Arg-178 and Arg-189. Ser-218 contributes to the GTP binding site.

The protein belongs to the adenylate kinase family. AK3 subfamily. As to quaternary structure, monomer.

The protein localises to the mitochondrion matrix. The catalysed reaction is a ribonucleoside 5'-triphosphate + AMP = a ribonucleoside 5'-diphosphate + ADP. In terms of biological role, involved in maintaining the homeostasis of cellular nucleotides by catalyzing the interconversion of nucleoside phosphates. Has GTP:AMP phosphotransferase and ITP:AMP phosphotransferase activities. Does not accept ATP as phosphate donor. The polypeptide is GTP:AMP phosphotransferase, mitochondrial (Saccharomyces cerevisiae (Baker's yeast)).